Reading from the N-terminus, the 865-residue chain is Probable alpha/beta-glucosidase ARB_02101 (865 aa).

Positions 1–21 (MFGRTLALAAVFATTVLSAAA) are cleaved as a signal peptide. Asn-101 and Asn-299 each carry an N-linked (GlcNAc...) asparagine glycan. Residue Asp-428 is the Nucleophile of the active site. Glu-431 is a catalytic residue. Asn-515 carries an N-linked (GlcNAc...) asparagine glycan. Asp-548 serves as the catalytic Proton donor. N-linked (GlcNAc...) asparagine glycosylation is found at Asn-549, Asn-585, and Asn-748.

This sequence belongs to the glycosyl hydrolase 31 family.

The protein resides in the secreted. It catalyses the reaction Hydrolysis of terminal, non-reducing (1-&gt;4)-linked alpha-D-glucose residues with release of alpha-D-glucose.. The catalysed reaction is Hydrolysis of terminal, non-reducing beta-D-glucosyl residues with release of beta-D-glucose.. Glucosidase involved in the degradation of cellulosic biomass. Has both alpha- and beta-glucosidase activity. This chain is Probable alpha/beta-glucosidase ARB_02101, found in Arthroderma benhamiae (strain ATCC MYA-4681 / CBS 112371) (Trichophyton mentagrophytes).